A 188-amino-acid chain; its full sequence is Segregation and condensation protein B (188 aa).

Belongs to the ScpB family. As to quaternary structure, homodimer. Homodimerization may be required to stabilize the binding of ScpA to the Smc head domains. Component of a cohesin-like complex composed of ScpA, ScpB and the Smc homodimer, in which ScpA and ScpB bind to the head domain of Smc. The presence of the three proteins is required for the association of the complex with DNA.

Its subcellular location is the cytoplasm. Functionally, participates in chromosomal partition during cell division. May act via the formation of a condensin-like complex containing Smc and ScpA that pull DNA away from mid-cell into both cell halves. This chain is Segregation and condensation protein B, found in Streptococcus gordonii (strain Challis / ATCC 35105 / BCRC 15272 / CH1 / DL1 / V288).